Here is an 83-residue protein sequence, read N- to C-terminus: Small ribosomal subunit protein bS16 (83 aa).

The protein belongs to the bacterial ribosomal protein bS16 family.

This Aromatoleum aromaticum (strain DSM 19018 / LMG 30748 / EbN1) (Azoarcus sp. (strain EbN1)) protein is Small ribosomal subunit protein bS16.